The chain runs to 328 residues: Malate dehydrogenase (328 aa).

An NAD(+)-binding site is contributed by 11 to 17; sequence GAAGQIG. The substrate site is built by Arg94 and Arg100. NAD(+)-binding positions include Asn107, Gln114, and 131 to 133; that span reads VGN. The substrate site is built by Asn133 and Arg164. The active-site Proton acceptor is the His189.

This sequence belongs to the LDH/MDH superfamily. MDH type 2 family.

It carries out the reaction (S)-malate + NAD(+) = oxaloacetate + NADH + H(+). In terms of biological role, catalyzes the reversible oxidation of malate to oxaloacetate. This chain is Malate dehydrogenase, found in Xanthomonas euvesicatoria pv. vesicatoria (strain 85-10) (Xanthomonas campestris pv. vesicatoria).